Reading from the N-terminus, the 341-residue chain is tRNA N6-adenosine threonylcarbamoyltransferase (341 aa).

Residues H111 and H115 each coordinate Fe cation. Substrate-binding positions include 134–138 (LVSGG), D167, G180, and N277. D305 contacts Fe cation.

This sequence belongs to the KAE1 / TsaD family. Fe(2+) serves as cofactor.

Its subcellular location is the cytoplasm. It carries out the reaction L-threonylcarbamoyladenylate + adenosine(37) in tRNA = N(6)-L-threonylcarbamoyladenosine(37) in tRNA + AMP + H(+). In terms of biological role, required for the formation of a threonylcarbamoyl group on adenosine at position 37 (t(6)A37) in tRNAs that read codons beginning with adenine. Is involved in the transfer of the threonylcarbamoyl moiety of threonylcarbamoyl-AMP (TC-AMP) to the N6 group of A37, together with TsaE and TsaB. TsaD likely plays a direct catalytic role in this reaction. This is tRNA N6-adenosine threonylcarbamoyltransferase from Chromobacterium violaceum (strain ATCC 12472 / DSM 30191 / JCM 1249 / CCUG 213 / NBRC 12614 / NCIMB 9131 / NCTC 9757 / MK).